Reading from the N-terminus, the 477-residue chain is Stromelysin-1 (477 aa).

The N-terminal stretch at 1-17 (MKGLPVLLWLCVVVCSS) is a signal peptide. A propeptide spans 18–99 (YPLHDSARDD…PRCGVPDVGG (82 aa)) (activation peptide). Residues 90–97 (PRCGVPDV) carry the Cysteine switch motif. Cys-92 contributes to the Zn(2+) binding site. Residues Asp-124 and Asp-158 each contribute to the Ca(2+) site. Positions 168 and 170 each coordinate Zn(2+). Residues Asp-175, Gly-176, Gly-178, and Val-180 each coordinate Ca(2+). His-183 contributes to the Zn(2+) binding site. Ca(2+) contacts are provided by Gly-190, Asn-192, and Asp-194. His-196 contacts Zn(2+). Residues Asp-198, Asp-199, and Glu-201 each contribute to the Ca(2+) site. Zn(2+) is bound at residue His-218. Glu-219 is an active-site residue. Zn(2+) is bound by residues His-222 and His-228. 4 Hemopexin repeats span residues 287–336 (SPMC…WPSL), 337–383 (PSNM…GLPA), 385–433 (VKKI…FPGV), and 434–477 (DSRV…WFNC). A disulfide bridge links Cys-290 with Cys-477. Residue Asp-297 coordinates Ca(2+). 2 residues coordinate Ca(2+): Asp-389 and Asp-438.

Belongs to the peptidase M10A family. Requires Ca(2+) as cofactor. It depends on Zn(2+) as a cofactor.

The protein localises to the secreted. Its subcellular location is the extracellular space. It is found in the extracellular matrix. It carries out the reaction Preferential cleavage where P1', P2' and P3' are hydrophobic residues.. Metalloproteinase with a rather broad substrate specificity that can degrade fibronectin, laminin, gelatins of type I, III, IV, and V; collagens III, IV, X, and IX, and cartilage proteoglycans. Activates different molecules including growth factors, plasminogen or other matrix metalloproteinases such as MMP9. Once released into the extracellular matrix (ECM), the inactive pro-enzyme is activated by the plasmin cascade signaling pathway. Also acts intracellularly. For example, in dopaminergic neurons, gets activated by the serine protease HTRA2 upon stress and plays a pivotal role in DA neuronal degeneration by mediating microglial activation and alpha-synuclein/SNCA cleavage. In addition, plays a role in immune response and possesses antiviral activity against various viruses. Mechanistically, translocates from the cytoplasm into the cell nucleus upon virus infection to influence NF-kappa-B activities. The protein is Stromelysin-1 (Mmp3) of Mus musculus (Mouse).